Here is a 194-residue protein sequence, read N- to C-terminus: RxLR effector protein Avh240 (194 aa).

An N-terminal signal peptide occupies residues 1-23 (MRPYFTLLLALAFILACTNLVEA). Positions 38–57 (RHLRTAVASVVDLPDDEDER) match the RxLR-dEER motif. Residues 58-108 (LLGYNTVQLWRMRRTANKLMNGKLTTQKEAALKKWMASQQDKFLAKWLKSS) form a host plasma membrane-binding region.

The protein belongs to the RxLR effector family. In terms of assembly, homodimer. Interacts with host soybean aspartic protease AP1.

The protein localises to the secreted. It is found in the host cell membrane. In terms of biological role, effector that suppresses plant defense responses during the early stages of pathogen infection. Suppresses cell death induced by effectors and PAMPs in plant hosts. Avh240 dimerizes and localizes at the plasma membrane to interfere with aspartic protease AP1 secretion, which presents an effective mechanism by which effector proteins suppress plant apoplastic immunity. This Phytophthora sojae (Soybean stem and root rot agent) protein is RxLR effector protein Avh240.